The sequence spans 171 residues: Large ribosomal subunit protein uL10 (171 aa).

Belongs to the universal ribosomal protein uL10 family. In terms of assembly, part of the ribosomal stalk of the 50S ribosomal subunit. The N-terminus interacts with L11 and the large rRNA to form the base of the stalk. The C-terminus forms an elongated spine to which L12 dimers bind in a sequential fashion forming a multimeric L10(L12)X complex.

Functionally, forms part of the ribosomal stalk, playing a central role in the interaction of the ribosome with GTP-bound translation factors. This is Large ribosomal subunit protein uL10 from Paracoccus denitrificans (strain Pd 1222).